Here is a 259-residue protein sequence, read N- to C-terminus: MQSWRQQLNLFLIAMGFFTRIPMPKWVEVDAEKLNQASRYFGLVGTLIGVLSALVYSVMLHWVSPSIAIIFAMIASVLLTGGFHEDGLADTADGLGGGWTVEAKLQIMKDSRLGSYGALALVLCLLLKWQLLSELALFDPSSVSLALILGHTLSRVVAASFIFSEQYVSDDASSKSKPLAMQQSINELSILLATAAISLLLISFMQALVLILGLLSVRIALAWWFNKQIGGYTGDTLGATQQIAEVVCYLLLLIVGASW.

The next 6 helical transmembrane spans lie at 37 to 57 (ASRYFGLVGTLIGVLSALVYS), 58 to 78 (VMLHWVSPSIAIIFAMIASVL), 118 to 138 (ALALVLCLLLKWQLLSELALF), 143 to 163 (VSLALILGHTLSRVVAASFIF), 195 to 215 (AAISLLLISFMQALVLILGLL), and 237 to 257 (LGATQQIAEVVCYLLLLIVGA).

It belongs to the CobS family. Mg(2+) serves as cofactor.

It is found in the cell inner membrane. The enzyme catalyses alpha-ribazole + adenosylcob(III)inamide-GDP = adenosylcob(III)alamin + GMP + H(+). The catalysed reaction is alpha-ribazole 5'-phosphate + adenosylcob(III)inamide-GDP = adenosylcob(III)alamin 5'-phosphate + GMP + H(+). It functions in the pathway cofactor biosynthesis; adenosylcobalamin biosynthesis; adenosylcobalamin from cob(II)yrinate a,c-diamide: step 7/7. Functionally, joins adenosylcobinamide-GDP and alpha-ribazole to generate adenosylcobalamin (Ado-cobalamin). Also synthesizes adenosylcobalamin 5'-phosphate from adenosylcobinamide-GDP and alpha-ribazole 5'-phosphate. The polypeptide is Adenosylcobinamide-GDP ribazoletransferase (Shewanella piezotolerans (strain WP3 / JCM 13877)).